Here is a 245-residue protein sequence, read N- to C-terminus: Aquaporin SIP1-1 (245 aa).

Transmembrane regions (helical) follow at residues 14-34 (AVVTFLWVLCASALGASTAAV) and 55-75 (LLSVLLFTFDLLCGALGGASF). An NPA 1 motif is present at residues 76–78 (NPT). 3 helical membrane-spanning segments follow: residues 100–120 (FPAQAAGAVGGALAISELMPA), 138–158 (GALAEGVLTFVITLTVLWVIV), and 164–184 (VILKTLLLSTSIVSVILAGAE). The NPA 2 signature appears at 191–193 (NPA). The helical transmembrane segment at 213–233 (VYWICPFIGAMLAGWIFRVVF) threads the bilayer.

The protein belongs to the MIP/aquaporin (TC 1.A.8) family. SIP (TC 1.A.8.10) subfamily.

It is found in the membrane. Its function is as follows. Aquaporins facilitate the transport of water and small neutral solutes across cell membranes. This is Aquaporin SIP1-1 (SIP1-1) from Zea mays (Maize).